Here is a 686-residue protein sequence, read N- to C-terminus: Leucine-rich repeat-containing protein 49 (686 aa).

LRR repeat units follow at residues 113-134 (HLRL…SNLQ), 135-156 (KLIS…STLR), 157-178 (CLRV…ENLK), 179-200 (SLDV…NHLC), 201-222 (ELRV…NGLD), 223-244 (SLTE…DNLP), and 245-266 (CLQH…SCLA). The region spanning 279–317 (NPIAQESWYKHTVLQNMMQLRQLDMKRITEEERRMASVL) is the LRRCT domain. Residues 303–341 (MKRITEEERRMASVLAKKEEEKKRESHKQSLLKEKKRLT) adopt a coiled-coil conformation. Residues 360-388 (ATNEDRKDSDSPQDPCQIDGSTLSAFPEE) form a disordered region.

As to quaternary structure, part of the neuronal tubulin polyglutamylase complex which contains TPGS1, TPGS2, TTLL1, LRRC49 and NICN1. Interacts with PCM1; TTLL1, TPGS1, TPGS2 and LRRC49.

Its subcellular location is the cytoplasm. It is found in the cytoskeleton. The protein resides in the microtubule organizing center. The protein localises to the centrosome. It localises to the centriolar satellite. Its function is as follows. Subunit of the tubulin polyglutamylase complex (TPGC). The complex mediates cilia and flagella polyglutamylation which is essential for their biogenesis and motility. The polypeptide is Leucine-rich repeat-containing protein 49 (Homo sapiens (Human)).